Consider the following 169-residue polypeptide: uncharacterized protein (169 aa).

The 129-residue stretch at L35 to L163 folds into the Nudix hydrolase domain. Positions Y81 to H103 match the Nudix box motif. Mg(2+) is bound by residues E88 and E92.

Belongs to the Nudix hydrolase family. Mg(2+) is required as a cofactor.

This is an uncharacterized protein from Pseudomonas aeruginosa (strain ATCC 15692 / DSM 22644 / CIP 104116 / JCM 14847 / LMG 12228 / 1C / PRS 101 / PAO1).